The sequence spans 251 residues: Hydroxyacylglutathione hydrolase (251 aa).

Histidine 53, histidine 55, aspartate 57, histidine 58, histidine 110, aspartate 127, and histidine 165 together coordinate Zn(2+).

The protein belongs to the metallo-beta-lactamase superfamily. Glyoxalase II family. In terms of assembly, monomer. Requires Zn(2+) as cofactor.

The enzyme catalyses an S-(2-hydroxyacyl)glutathione + H2O = a 2-hydroxy carboxylate + glutathione + H(+). It participates in secondary metabolite metabolism; methylglyoxal degradation; (R)-lactate from methylglyoxal: step 2/2. Its function is as follows. Thiolesterase that catalyzes the hydrolysis of S-D-lactoyl-glutathione to form glutathione and D-lactic acid. This is Hydroxyacylglutathione hydrolase from Escherichia coli (strain SE11).